A 380-amino-acid chain; its full sequence is Ceramide synthase 2 (380 aa).

Topologically, residues 1–40 (MLQTLYDYFWWERLWLPVNLTWADLEDRDGRVYAKASDLY) are lumenal. N19 carries an N-linked (GlcNAc...) asparagine glycan. Residues 41-61 (ITLPLALLFLIVRYFFELYVA) traverse the membrane as a helical segment. Positions 67-128 (LLNIKEKTRL…RRRRNQDRPS (62 aa)) are homeobox-like. The region spanning 131–332 (KKFREASWRF…ILRMAHKFIT (202 aa)) is the TLC domain. Helical transmembrane passes span 140–160 (FTFY…KPWF), 181–201 (WYYM…ASDV), 209–229 (QIIH…ANYI), and 264–284 (IFIV…PFWI). The Last loop motif signature appears at 291 to 300 (YPLELYPAFF). Residues 304–324 (FFNSMMGVLQLLHIFWAYLIL) form a helical membrane-spanning segment. Over 325 to 380 (RMAHKFITGKLVEDERSDREETESSEGEEAAAGGGAKSRPLANGHPILNNNHRKND) the chain is Cytoplasmic. A disordered region spans residues 338 to 380 (DERSDREETESSEGEEAAAGGGAKSRPLANGHPILNNNHRKND). The residue at position 341 (S341) is a Phosphoserine. Residues 344-353 (EETESSEGEE) show a composition bias toward acidic residues. Position 346 is a phosphothreonine (T346). Residues S348 and S349 each carry the phosphoserine modification.

In terms of assembly, interacts with ATP6V0C, ASGR1, ASGR2 and SLC22A1/OCT1. Interacts with ELOV1, HSD17B12 and TECR. Interacts with NDUFS2. Interacts with PAQR4; the interaction regulates the stability and activity of CERS2 and is inhibited in presence of ceramides. Acetylated. Deacetylation by SIRT3 increases enzyme activity and promotes mitochondrial ceramide accumulation. Post-translationally, phosphorylated at the C-terminus by CK2, leading to increase the ceramide synthase activity. Expressed in kidney, liver, brain, heart, placenta and lung.

It localises to the endoplasmic reticulum membrane. The enzyme catalyses a very long-chain fatty acyl-CoA + a sphingoid base = an N-(very-long-chain fatty acyl)-sphingoid base + CoA + H(+). It carries out the reaction docosanoyl-CoA + sphinganine = N-docosanoylsphinganine + CoA + H(+). It catalyses the reaction tetracosanoyl-CoA + sphinganine = N-tetracosanoylsphinganine + CoA + H(+). The catalysed reaction is hexacosanoyl-CoA + sphinganine = N-hexacosanoylsphinganine + CoA + H(+). The enzyme catalyses (15Z)-tetracosenoyl-CoA + sphinganine = N-(15Z-tetracosenoyl)-sphinganine + CoA + H(+). It carries out the reaction 2-hydroxytetracosanoyl-CoA + sphinganine = N-(2-hydroxytetracosanoyl)-sphinganine + CoA + H(+). It catalyses the reaction 2-hydroxydocosanoyl-CoA + sphinganine = N-(2-hydroxydocosanoyl)-sphinganine + CoA + H(+). The catalysed reaction is 2-hydroxytetracosenoyl-CoA + sphinganine = N-(2-hydroxytetracosenoyl)-sphinganine + CoA + H(+). The enzyme catalyses tetracosenoyl-CoA + sphinganine = an N-tetracosenoylsphinganine + CoA + H(+). It carries out the reaction hexacosenoyl-CoA + sphinganine = N-hexacosenoylsphinganine + CoA + H(+). It catalyses the reaction tetracosanoyl-CoA + sphing-4-enine = N-tetracosanoyl-sphing-4-enine + CoA + H(+). The catalysed reaction is tetracosenoyl-CoA + sphing-4-enine = N-(tetracosenoyl)-sphing-4-enine + CoA + H(+). The enzyme catalyses heptadecasphing-4-enine + tetracosanoyl-CoA = N-tetracosanoyl-heptadecasphing-4-enine + CoA + H(+). It carries out the reaction a fatty acyl-CoA + sphing-4-enine = an N-acylsphing-4-enine + CoA + H(+). It catalyses the reaction sphing-4-enine + hexadecanoyl-CoA = N-hexadecanoylsphing-4-enine + CoA + H(+). The catalysed reaction is sphing-4-enine + octadecanoyl-CoA = N-octadecanoylsphing-4-enine + CoA + H(+). The enzyme catalyses eicosanoyl-CoA + sphing-4-enine = N-eicosanoyl-sphing-4-enine + CoA + H(+). It carries out the reaction sphinganine + hexadecanoyl-CoA = N-hexadecanoylsphinganine + CoA + H(+). It catalyses the reaction sphinganine + octadecanoyl-CoA = N-(octadecanoyl)-sphinganine + CoA + H(+). The catalysed reaction is sphinganine + (9Z)-octadecenoyl-CoA = N-(9Z-octadecenoyl)-sphinganine + CoA + H(+). The enzyme catalyses eicosanoyl-CoA + sphinganine = N-eicosanoylsphinganine + CoA + H(+). It functions in the pathway lipid metabolism; sphingolipid metabolism. Its activity is regulated as follows. Ceramide synthase activity is inhibited by sphingosine-1-phosphate. In terms of biological role, ceramide synthase that catalyzes the transfer of the acyl chain from acyl-CoA to a sphingoid base, with high selectivity toward very-long-chain fatty acyl-CoA (chain length C22-C27). N-acylates sphinganine and sphingosine bases to form dihydroceramides and ceramides in de novo synthesis and salvage pathways, respectively. Plays a non-redundant role in the synthesis of ceramides with very-long-chain fatty acids in kidney, liver and brain. Regulates the abundance of myelin-specific sphingolipids galactosylceramide and sulfatide that affects myelin sheath architecture and motor neuron functions. This is Ceramide synthase 2 from Homo sapiens (Human).